Here is a 434-residue protein sequence, read N- to C-terminus: Protein maelstrom homolog (434 aa).

The segment at residues 4-73 (RKASRNAYYF…AQGKDPGPSE (70 aa)) is a DNA-binding region (HMG box). Positions 357–385 (SHFNSSNEEQRSNTPIGDYPSRAKISGQN) are disordered.

Belongs to the maelstrom family. Interacts with SMARCB1, SIN3B and DDX4. Interacts with piRNA-associated proteins TDRD1, PIWIL1 and PIWIL2. Interacts with TEX19. As to expression, testis-specific. Expressed in various cancer cell lines, probably due to demethylation of its promoter.

The protein localises to the cytoplasm. It localises to the nucleus. Its function is as follows. Plays a central role during spermatogenesis by repressing transposable elements and preventing their mobilization, which is essential for the germline integrity. Acts via the piRNA metabolic process, which mediates the repression of transposable elements during meiosis by forming complexes composed of piRNAs and Piwi proteins and governs the methylation and subsequent repression of transposons. Its association with piP-bodies suggests a participation in the secondary piRNAs metabolic process. Required for the localization of germ-cell factors to the meiotic nuage. The sequence is that of Protein maelstrom homolog (MAEL) from Homo sapiens (Human).